A 761-amino-acid chain; its full sequence is Elongation factor G, mitochondrial (761 aa).

The transit peptide at 1 to 42 (MSVQKMMWVPRKMVGGRIPFFTCSKVFSGFSRRSFHESPLAR) directs the protein to the mitochondrion. The 282-residue stretch at 68-349 (NKLRNIGISA…AIVDYLPNPS (282 aa)) folds into the tr-type G domain. GTP contacts are provided by residues 77–84 (AHIDSGKT), 148–152 (DTPGH), and 202–205 (NKMD).

Belongs to the TRAFAC class translation factor GTPase superfamily. Classic translation factor GTPase family. EF-G/EF-2 subfamily. Post-translationally, the precursor is processed in two steps involving mitochondrial intermediate peptidase (MIP) and mitochondrial processing peptidase (MPP).

Its subcellular location is the mitochondrion. It participates in protein biosynthesis; polypeptide chain elongation. Its function is as follows. Mitochondrial GTPase that catalyzes the GTP-dependent ribosomal translocation step during translation elongation. During this step, the ribosome changes from the pre-translocational (PRE) to the post-translocational (POST) state as the newly formed A-site-bound peptidyl-tRNA and P-site-bound deacylated tRNA move to the P and E sites, respectively. Catalyzes the coordinated movement of the two tRNA molecules, the mRNA and conformational changes in the ribosome. The polypeptide is Elongation factor G, mitochondrial (Saccharomyces cerevisiae (strain ATCC 204508 / S288c) (Baker's yeast)).